A 144-amino-acid polypeptide reads, in one-letter code: Urease accessory protein UreE (144 aa).

Belongs to the UreE family.

The protein resides in the cytoplasm. In terms of biological role, involved in urease metallocenter assembly. Binds nickel. Probably functions as a nickel donor during metallocenter assembly. The polypeptide is Urease accessory protein UreE (Thermosynechococcus vestitus (strain NIES-2133 / IAM M-273 / BP-1)).